Reading from the N-terminus, the 60-residue chain is MAVISNKNSKSHKRNRRGHIALEVPNIVLDKTTGEYTVAHHVSPKGLYKGRQVVAAPKQK.

This sequence belongs to the bacterial ribosomal protein bL32 family.

This Oenococcus oeni (strain ATCC BAA-331 / PSU-1) protein is Large ribosomal subunit protein bL32.